A 270-amino-acid polypeptide reads, in one-letter code: dTDP-6-deoxy-L-talose 4-dehydrogenase (NAD(+)) (270 aa).

Residues 11–12 (YI), 50–51 (DI), 72–76 (LAWQA), N87, T112, Y135, and K139 contribute to the NAD(+) site. T112 and Y135 together coordinate substrate. Y135 (proton acceptor) is an active-site residue.

This sequence belongs to the NAD(P)-dependent epimerase/dehydratase family.

The catalysed reaction is dTDP-6-deoxy-beta-L-talose + NAD(+) = dTDP-4-dehydro-beta-L-rhamnose + NADH + H(+). Its pathway is bacterial outer membrane biogenesis; LPS O-antigen biosynthesis. Functionally, catalyzes the reduction of dTDP-6-deoxy-L-lyxo-4-hexulose to dTDP-6-deoxy-L-talose. This Aggregatibacter actinomycetemcomitans (Actinobacillus actinomycetemcomitans) protein is dTDP-6-deoxy-L-talose 4-dehydrogenase (NAD(+)) (tll).